A 258-amino-acid polypeptide reads, in one-letter code: Imidazole glycerol phosphate synthase subunit HisF (258 aa).

Active-site residues include Asp-11 and Asp-130.

The protein belongs to the HisA/HisF family. In terms of assembly, heterodimer of HisH and HisF.

It localises to the cytoplasm. It catalyses the reaction 5-[(5-phospho-1-deoxy-D-ribulos-1-ylimino)methylamino]-1-(5-phospho-beta-D-ribosyl)imidazole-4-carboxamide + L-glutamine = D-erythro-1-(imidazol-4-yl)glycerol 3-phosphate + 5-amino-1-(5-phospho-beta-D-ribosyl)imidazole-4-carboxamide + L-glutamate + H(+). Its pathway is amino-acid biosynthesis; L-histidine biosynthesis; L-histidine from 5-phospho-alpha-D-ribose 1-diphosphate: step 5/9. Its function is as follows. IGPS catalyzes the conversion of PRFAR and glutamine to IGP, AICAR and glutamate. The HisF subunit catalyzes the cyclization activity that produces IGP and AICAR from PRFAR using the ammonia provided by the HisH subunit. The chain is Imidazole glycerol phosphate synthase subunit HisF from Pectobacterium carotovorum subsp. carotovorum (strain PC1).